Reading from the N-terminus, the 400-residue chain is Enoyl-[acyl-carrier-protein] reductase [NADH] 2 (400 aa).

NAD(+)-binding positions include glycine 48 to phenylalanine 53, phenylalanine 75 to glutamate 76, aspartate 112 to alanine 113, and leucine 141 to alanine 142. Residue tyrosine 228 coordinates substrate. Tyrosine 238 serves as the catalytic Proton donor. Residues lysine 247 and leucine 276–threonine 278 contribute to the NAD(+) site.

It belongs to the TER reductase family. In terms of assembly, monomer.

The enzyme catalyses a 2,3-saturated acyl-[ACP] + NAD(+) = a (2E)-enoyl-[ACP] + NADH + H(+). Its pathway is lipid metabolism; fatty acid biosynthesis. Involved in the final reduction of the elongation cycle of fatty acid synthesis (FAS II). Catalyzes the reduction of a carbon-carbon double bond in an enoyl moiety that is covalently linked to an acyl carrier protein (ACP). In Vibrio vulnificus (strain CMCP6), this protein is Enoyl-[acyl-carrier-protein] reductase [NADH] 2.